The chain runs to 255 residues: Taurine import ATP-binding protein TauB (255 aa).

Residues 2 to 229 (LNVSGLWAEY…RYAEGEPCRA (228 aa)) enclose the ABC transporter domain. An ATP-binding site is contributed by 34–41 (GPSGCGKT).

The protein belongs to the ABC transporter superfamily. Taurine importer (TC 3.A.1.17.1) family. In terms of assembly, the complex is composed of two ATP-binding proteins (TauB), two transmembrane proteins (TauC) and a solute-binding protein (TauA).

The protein resides in the cell inner membrane. It catalyses the reaction taurine(out) + ATP + H2O = taurine(in) + ADP + phosphate + H(+). Part of the ABC transporter complex TauABC involved in taurine import. Responsible for energy coupling to the transport system. This Yersinia pestis bv. Antiqua (strain Antiqua) protein is Taurine import ATP-binding protein TauB.